Consider the following 191-residue polypeptide: ADP-ribosylation factor (191 aa).

Residue G2 is the site of N-myristoyl glycine attachment. Residues G24–T31, D67–Q71, and N128–D131 contribute to the GTP site.

This sequence belongs to the small GTPase superfamily. Arf family.

The protein localises to the golgi apparatus. GTP-binding protein involved in protein trafficking; may modulate vesicle budding and uncoating within the Golgi apparatus. In Giardia intestinalis (Giardia lamblia), this protein is ADP-ribosylation factor.